A 162-amino-acid chain; its full sequence is Large ribosomal subunit protein uL15 (162 aa).

The disordered stretch occupies residues 1–44 (MKLNELRDNPGATKNRIRVGRGIGSGKGKTAGRGVKGQKSREGV). Residues 21-35 (RGIGSGKGKTAGRGV) are compositionally biased toward gly residues.

It belongs to the universal ribosomal protein uL15 family. Part of the 50S ribosomal subunit.

Its function is as follows. Binds to the 23S rRNA. The chain is Large ribosomal subunit protein uL15 from Rhodospirillum rubrum (strain ATCC 11170 / ATH 1.1.1 / DSM 467 / LMG 4362 / NCIMB 8255 / S1).